The chain runs to 810 residues: Soluble starch synthase 2-3, chloroplastic/amyloplastic (810 aa).

Residues 1–16 constitute a chloroplast transit peptide; it reads MSSAVVASSTTFLVAL. Disordered regions lie at residues 43–265 and 281–313; these read GRAG…PIPA and EPDA…SGPL. Residues 63-83 are compositionally biased toward basic and acidic residues; the sequence is RDAGVVRRADDGENEAAVERA. Residues 84–93 are compositionally biased toward acidic residues; it reads GEDDEEEEEF. Residues 102-116 show a composition bias toward basic residues; sequence RSRRGGVGKVLKRRG. Residues 129 to 148 are compositionally biased toward low complexity; the sequence is DAARVRGAAAPAPAPTQDAA. Positions 281-310 are enriched in acidic residues; it reads EPDAAEDGDDDDDWADSDASDSEIDQDDDS. Lys333 is an ADP-alpha-D-glucose binding site.

The protein belongs to the glycosyltransferase 1 family. Bacterial/plant glycogen synthase subfamily. Expressed most exclusively in endosperm.

It is found in the plastid. The protein resides in the amyloplast. It localises to the chloroplast. The enzyme catalyses [(1-&gt;4)-alpha-D-glucosyl](n) + ADP-alpha-D-glucose = [(1-&gt;4)-alpha-D-glucosyl](n+1) + ADP + H(+). Its pathway is glycan biosynthesis; starch biosynthesis. Functionally, plays an important role during endosperm starch synthesis. Determines the type of amylopectin structure of starch grain. Synthesizes long B1 amylopectin chains by elongating short A and B1 chains, independently of the other soluble starch synthases. Barely active in japonica subspecies. This chain is Soluble starch synthase 2-3, chloroplastic/amyloplastic (SSII-3), found in Oryza sativa subsp. indica (Rice).